Here is a 474-residue protein sequence, read N- to C-terminus: Probable glycine dehydrogenase (decarboxylating) subunit 2 (474 aa).

Lysine 262 bears the N6-(pyridoxal phosphate)lysine mark.

It belongs to the GcvP family. C-terminal subunit subfamily. In terms of assembly, the glycine cleavage system is composed of four proteins: P, T, L and H. In this organism, the P 'protein' is a heterodimer of two subunits. Pyridoxal 5'-phosphate is required as a cofactor.

It carries out the reaction N(6)-[(R)-lipoyl]-L-lysyl-[glycine-cleavage complex H protein] + glycine + H(+) = N(6)-[(R)-S(8)-aminomethyldihydrolipoyl]-L-lysyl-[glycine-cleavage complex H protein] + CO2. Functionally, the glycine cleavage system catalyzes the degradation of glycine. The P protein binds the alpha-amino group of glycine through its pyridoxal phosphate cofactor; CO(2) is released and the remaining methylamine moiety is then transferred to the lipoamide cofactor of the H protein. The chain is Probable glycine dehydrogenase (decarboxylating) subunit 2 from Thermotoga maritima (strain ATCC 43589 / DSM 3109 / JCM 10099 / NBRC 100826 / MSB8).